The chain runs to 325 residues: Phospho-N-acetylmuramoyl-pentapeptide-transferase (325 aa).

10 helical membrane passes run 3–23, 48–68, 79–99, 106–126, 136–156, 174–194, 199–219, 223–243, 246–266, and 298–318; these read LMIY…PILI, GTPT…VFVV, AIFA…LKII, LKAY…GFYA, IIVP…PFII, GLAT…SYAT, LAVF…YNAY, VFMG…VAMM, LPLI…SVIL, and IVSI…LSLI.

It belongs to the glycosyltransferase 4 family. MraY subfamily. The cofactor is Mg(2+).

It is found in the cell membrane. It carries out the reaction UDP-N-acetyl-alpha-D-muramoyl-L-alanyl-gamma-D-glutamyl-meso-2,6-diaminopimeloyl-D-alanyl-D-alanine + di-trans,octa-cis-undecaprenyl phosphate = di-trans,octa-cis-undecaprenyl diphospho-N-acetyl-alpha-D-muramoyl-L-alanyl-D-glutamyl-meso-2,6-diaminopimeloyl-D-alanyl-D-alanine + UMP. Its pathway is cell wall biogenesis; peptidoglycan biosynthesis. Catalyzes the initial step of the lipid cycle reactions in the biosynthesis of the cell wall peptidoglycan: transfers peptidoglycan precursor phospho-MurNAc-pentapeptide from UDP-MurNAc-pentapeptide onto the lipid carrier undecaprenyl phosphate, yielding undecaprenyl-pyrophosphoryl-MurNAc-pentapeptide, known as lipid I. The sequence is that of Phospho-N-acetylmuramoyl-pentapeptide-transferase from Clostridium novyi (strain NT).